Consider the following 391-residue polypeptide: Phosphoglycerate kinase (391 aa).

Residues 21–23 (DLN), R36, 59–62 (HLGR), R113, and R146 each bind substrate. ATP is bound by residues K197, E319, and 345–348 (GGDT).

It belongs to the phosphoglycerate kinase family. As to quaternary structure, monomer.

Its subcellular location is the cytoplasm. It carries out the reaction (2R)-3-phosphoglycerate + ATP = (2R)-3-phospho-glyceroyl phosphate + ADP. Its pathway is carbohydrate degradation; glycolysis; pyruvate from D-glyceraldehyde 3-phosphate: step 2/5. This is Phosphoglycerate kinase from Shewanella denitrificans (strain OS217 / ATCC BAA-1090 / DSM 15013).